Reading from the N-terminus, the 662-residue chain is Probable quinol oxidase subunit 1 (662 aa).

2 helical membrane-spanning segments follow: residues 14–34 (WMIT…IAVI) and 58–78 (LMYL…ALLL). H102 provides a ligand contact to Fe(II)-heme a. Helical transmembrane passes span 103-123 (GVIM…NVVV), 140-160 (ISFW…IIGG), 187-207 (VAIQ…FVTI), 228-248 (FITT…LALM), 273-293 (FFWV…FGIY), 311-331 (MVWA…HHFF), 336-356 (GALI…PTGV), and 376-396 (MLFS…GVML). Cu cation is bound by residues H279, Y283, H328, and H329. The 1'-histidyl-3'-tyrosine (His-Tyr) cross-link spans 279-283 (HPEVY). H414 serves as a coordination point for heme a3. The next 5 membrane-spanning stretches (helical) occupy residues 415–435 (FHYT…IFWY), 451–471 (CFWL…ILGL), 492–512 (VIST…VVSI), 586–605 (THTG…FLIF), and 609–628 (IPAA…QSFV). H416 is a Fe(II)-heme a binding site.

Belongs to the heme-copper respiratory oxidase family. Requires Cu cation as cofactor. The cofactor is ferriheme a. Heme A3. is required as a cofactor.

Its subcellular location is the cell membrane. It carries out the reaction 2 a quinol + O2 = 2 a quinone + 2 H2O. It functions in the pathway energy metabolism; oxidative phosphorylation. Catalyzes quinol oxidation with the concomitant reduction of oxygen to water. This chain is Probable quinol oxidase subunit 1 (qoxB), found in Staphylococcus haemolyticus (strain JCSC1435).